A 130-amino-acid chain; its full sequence is Small ribosomal subunit protein uS9 (130 aa).

The protein belongs to the universal ribosomal protein uS9 family.

This is Small ribosomal subunit protein uS9 from Streptococcus equi subsp. equi (strain 4047).